Consider the following 195-residue polypeptide: Large ribosomal subunit protein bL9 (195 aa).

This sequence belongs to the bacterial ribosomal protein bL9 family.

In terms of biological role, binds to the 23S rRNA. The polypeptide is Large ribosomal subunit protein bL9 (Rhodopseudomonas palustris (strain TIE-1)).